We begin with the raw amino-acid sequence, 270 residues long: MMSLIVKDLQRYPFHLVDPSPWPFVASFSALIILLGGVLYFHTYQGSLVILFFGIFFLLLIIFVWWRDVVRESTFEGNHTTMVQLGMRYGIMLFIFSEVILFIAFFWAFFHNSLIPALETGVVWPPKGIQFFSPWDIPFLNTIILLLSGCAVTWSHNCIISGFRRQAIFSLILTIGLALIFTIFQIYEYAIASFHLSDGAYGSTFFMITGLHGFHVIVGTFFLFVCMFRLVQYHFTMQHHYGFEAATWYWHFVDVVWLFLFVSIYWWGSF.

The next 7 helical transmembrane spans lie at 21–41, 46–66, 90–110, 131–151, 167–187, 205–225, and 248–268; these read PWPFVASFSALIILLGGVLYF, GSLVILFFGIFFLLLIIFVWW, GIMLFIFSEVILFIAFFWAFF, FFSPWDIPFLNTIILLLSGCA, AIFSLILTIGLALIFTIFQIY, FFMITGLHGFHVIVGTFFLFV, and WYWHFVDVVWLFLFVSIYWWG.

This sequence belongs to the cytochrome c oxidase subunit 3 family. Component of the cytochrome c oxidase (complex IV, CIV), a multisubunit enzyme composed of a catalytic core of 3 subunits and several supernumerary subunits. The complex exists as a monomer or a dimer and forms supercomplexes (SCs) in the inner mitochondrial membrane with ubiquinol-cytochrome c oxidoreductase (cytochrome b-c1 complex, complex III, CIII).

Its subcellular location is the mitochondrion inner membrane. It carries out the reaction 4 Fe(II)-[cytochrome c] + O2 + 8 H(+)(in) = 4 Fe(III)-[cytochrome c] + 2 H2O + 4 H(+)(out). In terms of biological role, component of the cytochrome c oxidase, the last enzyme in the mitochondrial electron transport chain which drives oxidative phosphorylation. The respiratory chain contains 3 multisubunit complexes succinate dehydrogenase (complex II, CII), ubiquinol-cytochrome c oxidoreductase (cytochrome b-c1 complex, complex III, CIII) and cytochrome c oxidase (complex IV, CIV), that cooperate to transfer electrons derived from NADH and succinate to molecular oxygen, creating an electrochemical gradient over the inner membrane that drives transmembrane transport and the ATP synthase. Cytochrome c oxidase is the component of the respiratory chain that catalyzes the reduction of oxygen to water. Electrons originating from reduced cytochrome c in the intermembrane space (IMS) are transferred via the dinuclear copper A center (CU(A)) of subunit 2 and heme A of subunit 1 to the active site in subunit 1, a binuclear center (BNC) formed by heme A3 and copper B (CU(B)). The BNC reduces molecular oxygen to 2 water molecules using 4 electrons from cytochrome c in the IMS and 4 protons from the mitochondrial matrix. This chain is Cytochrome c oxidase subunit 3 (COX3), found in Cyanidium caldarium (Red alga).